Reading from the N-terminus, the 165-residue chain is MRIDPSTLNLKEKVVFINRVAKVVKGGRNFRFSALVVVGDENGHVGVGMGKAVEIPEAIRKGIEDAKKHLVEVAMVDTTVPHAIQGEFGRGRVLIMPATEGTGVIAGGPVRAVLELAGLKDVRAKSLGSNNPKNMVGATINGLSRLRTAEQIAKLRGKSVEEILG.

In terms of domain architecture, S5 DRBM spans leucine 10–valine 73.

It belongs to the universal ribosomal protein uS5 family. Part of the 30S ribosomal subunit. Contacts proteins S4 and S8.

In terms of biological role, with S4 and S12 plays an important role in translational accuracy. Its function is as follows. Located at the back of the 30S subunit body where it stabilizes the conformation of the head with respect to the body. The sequence is that of Small ribosomal subunit protein uS5 from Clostridium novyi (strain NT).